Here is a 282-residue protein sequence, read N- to C-terminus: Bifunctional protein FolD (282 aa).

NADP(+) is bound by residues 164-166 (GRS) and serine 189.

Belongs to the tetrahydrofolate dehydrogenase/cyclohydrolase family. In terms of assembly, homodimer.

It catalyses the reaction (6R)-5,10-methylene-5,6,7,8-tetrahydrofolate + NADP(+) = (6R)-5,10-methenyltetrahydrofolate + NADPH. The enzyme catalyses (6R)-5,10-methenyltetrahydrofolate + H2O = (6R)-10-formyltetrahydrofolate + H(+). It functions in the pathway one-carbon metabolism; tetrahydrofolate interconversion. In terms of biological role, catalyzes the oxidation of 5,10-methylenetetrahydrofolate to 5,10-methenyltetrahydrofolate and then the hydrolysis of 5,10-methenyltetrahydrofolate to 10-formyltetrahydrofolate. The sequence is that of Bifunctional protein FolD from Lachnoclostridium phytofermentans (strain ATCC 700394 / DSM 18823 / ISDg) (Clostridium phytofermentans).